A 352-amino-acid chain; its full sequence is Tubby-like F-box protein 10 (352 aa).

Residues 1 to 11 (MAAVREPREEA) are compositionally biased toward basic and acidic residues. The interval 1–23 (MAAVREPREEAAVGEGEGEEEGR) is disordered. Residues 22–78 (GRWGGLLPELVEEVVRRVEASGGERWPARKDLVSCACVCRRWREAAAAVVRPLPESG) enclose the F-box domain.

This sequence belongs to the TUB family. As to expression, ubiquitous.

This is Tubby-like F-box protein 10 (TULP10) from Oryza sativa subsp. japonica (Rice).